The sequence spans 693 residues: E3 ubiquitin-protein ligase MARCHF7 (693 aa).

The residue at position 1 (Met1) is an N-acetylmethionine. Disordered stretches follow at residues 1-43 (MESK…RDSS), 69-136 (ESEI…LGSF), 158-281 (LMDY…RRTT), 296-342 (FFSR…EGRA), 361-430 (LSQN…RDSN), 445-475 (AANR…RNPG), and 512-533 (WNST…PEKL). 5 stretches are compositionally biased toward polar residues: residues 14–36 (VQPS…LNDS), 95–105 (SCTNCASTSAG), 112–132 (LNTV…SSMV), 167–184 (DFTT…SYSQ), and 192–215 (AVST…QTVP). Residues 216–234 (SSRDSSRSSFRSHFSPRQS) are compositionally biased toward low complexity. Positions 236–267 (SFRNSSHPAFSYFSSRNETPTISNSERGSSQR) are enriched in polar residues. Basic and acidic residues predominate over residues 268 to 279 (PYRESSDNEGRR). Residues 296–305 (FFSRRSSQDS) are compositionally biased toward low complexity. The span at 306–323 (LNTRSLSSENYISPRTLT) shows a compositional bias: polar residues. Phosphoserine is present on Ser318. A compositionally biased stretch (low complexity) spans 324–337 (SQSRNNGTSSSSDV). The residue at position 390 (Ser390) is a Phosphoserine. Over residues 451 to 463 (ASGASSSAAAGGS) the composition is skewed to low complexity. Over residues 517-533 (GKNDKAKSAPSRDPEKL) the composition is skewed to basic and acidic residues. The RING-CH-type zinc-finger motif lies at 546–616 (DDEEEGDLCR…ELCKEKLQLN (71 aa)). Positions 554, 557, 572, 574, 582, 585, 606, and 609 each coordinate Zn(2+). The residue at position 688 (Thr688) is a Phosphothreonine. Ser689 carries the phosphoserine modification.

In terms of tissue distribution, expressed in brain, thymus, muscle and kidney.

It localises to the cytoplasm. It catalyses the reaction S-ubiquitinyl-[E2 ubiquitin-conjugating enzyme]-L-cysteine + [acceptor protein]-L-lysine = [E2 ubiquitin-conjugating enzyme]-L-cysteine + N(6)-ubiquitinyl-[acceptor protein]-L-lysine.. It participates in protein modification; protein ubiquitination. In terms of biological role, E3 ubiquitin-protein ligase which may specifically enhance the E2 activity of HIP2. E3 ubiquitin ligases accept ubiquitin from an E2 ubiquitin-conjugating enzyme in the form of a thioester and then directly transfer the ubiquitin to targeted substrates. May be involved in T-cell proliferation by regulating LIF secretion. May play a role in lysosome homeostasis. Promotes 'Lys-6', 'Lys-11' and 'Lys-63'-linked mixed polyubiquitination on ATG14 leading to the inhibition of autophagy by impairing the interaction between ATG14 and STX7. Participates in the dopamine-mediated negative regulation of the NLRP3 inflammasome by promoting its uibiquitination and subsequent degradation. This chain is E3 ubiquitin-protein ligase MARCHF7 (Marchf7), found in Mus musculus (Mouse).